The following is a 259-amino-acid chain: Exotoxin A regulatory protein (259 aa).

The protein localises to the cell inner membrane. Positive regulation of toxA gene transcription. The sequence is that of Exotoxin A regulatory protein (toxR) from Pseudomonas aeruginosa (strain ATCC 15692 / DSM 22644 / CIP 104116 / JCM 14847 / LMG 12228 / 1C / PRS 101 / PAO1).